Reading from the N-terminus, the 113-residue chain is UPF0060 membrane protein Mmcs_2513 (113 aa).

4 helical membrane passes run 12-32, 37-57, 66-86, and 92-112; these read ALFVLAALLEIGGAWLVWQGV, GWIWAGAGVIALGAYGFVAAF, ILAAYGGVFVAGSLLWGVVVD, and RWDLTGALVCLVGVGLIMYAP.

Belongs to the UPF0060 family.

It localises to the cell membrane. The chain is UPF0060 membrane protein Mmcs_2513 from Mycobacterium sp. (strain MCS).